Here is a 288-residue protein sequence, read N- to C-terminus: Nucleotide-binding protein NE1849 (288 aa).

Residue 8 to 15 (GLSGSGKS) participates in ATP binding. 57-60 (DMRS) provides a ligand contact to GTP.

The protein belongs to the RapZ-like family.

Functionally, displays ATPase and GTPase activities. This is Nucleotide-binding protein NE1849 from Nitrosomonas europaea (strain ATCC 19718 / CIP 103999 / KCTC 2705 / NBRC 14298).